The primary structure comprises 242 residues: ATP synthase subunit a (242 aa).

Helical transmembrane passes span 29–49 (SSIY…LAFY), 84–104 (FIPL…LGMT), 114–134 (IIVT…VGFI), 140–160 (FLTL…MIVI), 189–209 (VIAS…IPLM), and 210–230 (VILI…FTIL).

This sequence belongs to the ATPase A chain family. As to quaternary structure, F-type ATPases have 2 components, CF(1) - the catalytic core - and CF(0) - the membrane proton channel. CF(1) has five subunits: alpha(3), beta(3), gamma(1), delta(1), epsilon(1). CF(0) has three main subunits: a(1), b(2) and c(9-12). The alpha and beta chains form an alternating ring which encloses part of the gamma chain. CF(1) is attached to CF(0) by a central stalk formed by the gamma and epsilon chains, while a peripheral stalk is formed by the delta and b chains.

The protein localises to the cell inner membrane. In terms of biological role, key component of the proton channel; it plays a direct role in the translocation of protons across the membrane. This is ATP synthase subunit a from Rickettsia prowazekii (strain Madrid E).